The following is an 83-amino-acid chain: uncharacterized protein (83 aa).

This is an uncharacterized protein from Schizosaccharomyces pombe (strain 972 / ATCC 24843) (Fission yeast).